The following is a 343-amino-acid chain: Ricin B-like lectin R40G2 (343 aa).

The 147-residue stretch at 194–340 folds into the Ricin B-type lectin domain; that stretch reads TVRVFSAAGE…CEGDNQRWKI (147 aa).

Functionally, lectin which binds carbohydrates in vitro. Interacts through its lectin domain with glycan structures containing specific motifs. The protein is Ricin B-like lectin R40G2 of Oryza sativa subsp. japonica (Rice).